We begin with the raw amino-acid sequence, 110 residues long: Large ribosomal subunit protein uL22 (110 aa).

The protein belongs to the universal ribosomal protein uL22 family. As to quaternary structure, part of the 50S ribosomal subunit.

In terms of biological role, this protein binds specifically to 23S rRNA; its binding is stimulated by other ribosomal proteins, e.g. L4, L17, and L20. It is important during the early stages of 50S assembly. It makes multiple contacts with different domains of the 23S rRNA in the assembled 50S subunit and ribosome. Functionally, the globular domain of the protein is located near the polypeptide exit tunnel on the outside of the subunit, while an extended beta-hairpin is found that lines the wall of the exit tunnel in the center of the 70S ribosome. The protein is Large ribosomal subunit protein uL22 of Delftia acidovorans (strain DSM 14801 / SPH-1).